Consider the following 66-residue polypeptide: Large ribosomal subunit protein uL29 (66 aa).

This sequence belongs to the universal ribosomal protein uL29 family.

The sequence is that of Large ribosomal subunit protein uL29 from Borrelia hermsii (strain HS1 / DAH).